Here is a 40-residue protein sequence, read N- to C-terminus: WCSTCLDLECGASRECYDPCFKAFGRAHGKCMNNKCRCYT.

4 cysteine pairs are disulfide-bonded: C2–C5, C10–C31, C16–C36, and C20–C38.

As to expression, expressed by the venom gland.

It is found in the secreted. In terms of biological role, inhibits high conductance calcium-activated potassium channels (KCNMA). Inhibits Shaker B potassium channels. This Tityus costatus (Brazilian scorpion) protein is Potassium channel toxin alpha-KTx 12.3.